Consider the following 81-residue polypeptide: uncharacterized protein (81 aa).

The interval 55–81 (LDKRNSNNKIEKSENTGENHDNNQDQK) is disordered.

This is an uncharacterized protein from Thermoproteus tenax virus 1 (strain KRA1) (TTV1).